We begin with the raw amino-acid sequence, 451 residues long: UDP-N-acetylmuramoylalanine--D-glutamate ligase (451 aa).

Position 118 to 124 (118 to 124) interacts with ATP; the sequence is GTKGKST.

The protein belongs to the MurCDEF family.

It localises to the cytoplasm. The catalysed reaction is UDP-N-acetyl-alpha-D-muramoyl-L-alanine + D-glutamate + ATP = UDP-N-acetyl-alpha-D-muramoyl-L-alanyl-D-glutamate + ADP + phosphate + H(+). It functions in the pathway cell wall biogenesis; peptidoglycan biosynthesis. Functionally, cell wall formation. Catalyzes the addition of glutamate to the nucleotide precursor UDP-N-acetylmuramoyl-L-alanine (UMA). This Borreliella burgdorferi (strain ZS7) (Borrelia burgdorferi) protein is UDP-N-acetylmuramoylalanine--D-glutamate ligase.